Reading from the N-terminus, the 97-residue chain is Co-chaperonin GroES (97 aa).

It belongs to the GroES chaperonin family. Heptamer of 7 subunits arranged in a ring. Interacts with the chaperonin GroEL.

The protein resides in the cytoplasm. In terms of biological role, together with the chaperonin GroEL, plays an essential role in assisting protein folding. The GroEL-GroES system forms a nano-cage that allows encapsulation of the non-native substrate proteins and provides a physical environment optimized to promote and accelerate protein folding. GroES binds to the apical surface of the GroEL ring, thereby capping the opening of the GroEL channel. This is Co-chaperonin GroES from Baumannia cicadellinicola subsp. Homalodisca coagulata.